The primary structure comprises 338 residues: tRNA-specific 2-thiouridylase MnmA (338 aa).

Residues 6–13 (LMSGGIDS) and M32 contribute to the ATP site. C87 serves as the catalytic Nucleophile. An intrachain disulfide couples C87 to C185. G111 lines the ATP pocket. Residues 135–137 (KDQ) form an interaction with tRNA region. C185 serves as the catalytic Cysteine persulfide intermediate. Residues 288 to 289 (RY) form an interaction with tRNA region.

It belongs to the MnmA/TRMU family.

The protein resides in the cytoplasm. It catalyses the reaction S-sulfanyl-L-cysteinyl-[protein] + uridine(34) in tRNA + AH2 + ATP = 2-thiouridine(34) in tRNA + L-cysteinyl-[protein] + A + AMP + diphosphate + H(+). Its function is as follows. Catalyzes the 2-thiolation of uridine at the wobble position (U34) of tRNA, leading to the formation of s(2)U34. This chain is tRNA-specific 2-thiouridylase MnmA, found in Syntrophomonas wolfei subsp. wolfei (strain DSM 2245B / Goettingen).